A 197-amino-acid chain; its full sequence is Dephospho-CoA kinase (197 aa).

In terms of domain architecture, DPCK spans 4–197 (RLGLTGSIGM…RQIRAGNIHA (194 aa)). ATP is bound at residue 12–17 (GMGKST).

The protein belongs to the CoaE family.

Its subcellular location is the cytoplasm. It carries out the reaction 3'-dephospho-CoA + ATP = ADP + CoA + H(+). It participates in cofactor biosynthesis; coenzyme A biosynthesis; CoA from (R)-pantothenate: step 5/5. In terms of biological role, catalyzes the phosphorylation of the 3'-hydroxyl group of dephosphocoenzyme A to form coenzyme A. This Ruegeria pomeroyi (strain ATCC 700808 / DSM 15171 / DSS-3) (Silicibacter pomeroyi) protein is Dephospho-CoA kinase.